The following is a 267-amino-acid chain: Carboxy-S-adenosyl-L-methionine synthase (267 aa).

Polar residues predominate over residues 1 to 11; that stretch reads MPNRDTQSQND. The tract at residues 1-25 is disordered; that stretch reads MPNRDTQSQNDTPRHSPEAAEPQRD. Residues 12 to 24 show a composition bias toward basic and acidic residues; sequence TPRHSPEAAEPQR. S-adenosyl-L-methionine contacts are provided by residues Tyr59, 84–86, 109–110, 137–138, Asn152, and Arg219; these read GCS, DN, and DI.

The protein belongs to the class I-like SAM-binding methyltransferase superfamily. Cx-SAM synthase family. As to quaternary structure, homodimer.

The enzyme catalyses prephenate + S-adenosyl-L-methionine = carboxy-S-adenosyl-L-methionine + 3-phenylpyruvate + H2O. Functionally, catalyzes the conversion of S-adenosyl-L-methionine (SAM) to carboxy-S-adenosyl-L-methionine (Cx-SAM). The polypeptide is Carboxy-S-adenosyl-L-methionine synthase (Yersinia pseudotuberculosis serotype O:1b (strain IP 31758)).